We begin with the raw amino-acid sequence, 175 residues long: Protein GrpE (175 aa).

This sequence belongs to the GrpE family. Homodimer.

The protein resides in the cytoplasm. Functionally, participates actively in the response to hyperosmotic and heat shock by preventing the aggregation of stress-denatured proteins, in association with DnaK and GrpE. It is the nucleotide exchange factor for DnaK and may function as a thermosensor. Unfolded proteins bind initially to DnaJ; upon interaction with the DnaJ-bound protein, DnaK hydrolyzes its bound ATP, resulting in the formation of a stable complex. GrpE releases ADP from DnaK; ATP binding to DnaK triggers the release of the substrate protein, thus completing the reaction cycle. Several rounds of ATP-dependent interactions between DnaJ, DnaK and GrpE are required for fully efficient folding. The chain is Protein GrpE from Thermoplasma acidophilum (strain ATCC 25905 / DSM 1728 / JCM 9062 / NBRC 15155 / AMRC-C165).